Reading from the N-terminus, the 620-residue chain is Two-component response regulator ORR27 (620 aa).

The 115-residue stretch at 24 to 138 (HVLVVDDDAA…AIKFIWKHVL (115 aa)) folds into the Response regulatory domain. Asp-76 bears the 4-aspartylphosphate mark. 2 disordered regions span residues 171–197 (PPAV…AELS) and 215–257 (VWSS…LEAT). A DNA-binding region (myb-like GARP) is located at residues 261-321 (KKVRTRFTWT…HLQKYRSWLE (61 aa)). Over residues 431–456 (SVSRDAHENGNSQARGSAMSNGTSGT) the composition is skewed to polar residues. 3 disordered regions span residues 431–457 (SVSR…SGTR), 501–523 (SDQN…NSKT), and 596–620 (PPRG…SSGP). The segment covering 603–620 (EIASHENTNGKNGASSGP) has biased composition (polar residues).

This sequence belongs to the ARR family. Type-B subfamily. In terms of processing, two-component system major event consists of a His-to-Asp phosphorelay between a sensor histidine kinase (HK) and a response regulator (RR). In plants, the His-to-Asp phosphorelay involves an additional intermediate named Histidine-containing phosphotransfer protein (HPt). This multistep phosphorelay consists of a His-Asp-His-Asp sequential transfer of a phosphate group between first a His and an Asp of the HK protein, followed by the transfer to a conserved His of the HPt protein and finally the transfer to an Asp in the receiver domain of the RR protein.

Its subcellular location is the nucleus. Functionally, transcriptional activator that binds specific DNA sequence. Functions as a response regulator involved in His-to-Asp phosphorelay signal transduction system. Phosphorylation of the Asp residue in the receiver domain activates the ability of the protein to promote the transcription of target genes. May directly activate some type-A response regulators in response to cytokinins. In Oryza sativa subsp. japonica (Rice), this protein is Two-component response regulator ORR27.